Consider the following 156-residue polypeptide: Oxidized purine nucleoside triphosphate hydrolase (156 aa).

The region spanning 3 to 132 is the Nudix hydrolase domain; it reads TSKLLTLVLV…WFPLMLQKKR (130 aa). Thr8 is a 2-oxo-dATP binding site. Residues Thr8, Lys23, Asn33, and 35–38 each bind O(6)-methyl-dGMP; that span reads FGGK. Lys23 serves as a coordination point for 8-oxo-dGTP. 2-oxo-dATP is bound by residues Asn33 and 35 to 38; that span reads FGGK. Mg(2+) is bound by residues Gly36, Glu52, Glu55, Glu56, and Glu100. The short motif at 37-58 is the Nudix box element; the sequence is GKVQTGETIEQAARRELLEESG. 117-120 is a binding site for 2-oxo-dATP; the sequence is WADD. 117 to 120 contributes to the O(6)-methyl-dGMP binding site; it reads WADD.

Belongs to the Nudix hydrolase family. As to quaternary structure, monomer. Mg(2+) serves as cofactor.

Its subcellular location is the cytoplasm. The protein localises to the cytosol. It is found in the mitochondrion matrix. The protein resides in the nucleus. The catalysed reaction is 2-oxo-dATP + H2O = 2-oxo-dAMP + diphosphate + H(+). It catalyses the reaction 2-oxo-ATP + H2O = 2-oxo-AMP + diphosphate + H(+). It carries out the reaction 8-oxo-dGTP + H2O = 8-oxo-dGMP + diphosphate + H(+). The enzyme catalyses 8-oxo-dATP + H2O = 8-oxo-dAMP + diphosphate + H(+). The catalysed reaction is O(6)-methyl-dGTP + H2O = O(6)-methyl-dGMP + diphosphate + H(+). It catalyses the reaction N(6)-methyl-dATP + H2O = N(6)-methyl-dAMP + diphosphate + H(+). It carries out the reaction N(6)-methyl-ATP + H2O = N(6)-methyl-AMP + diphosphate + H(+). With respect to regulation, inhibited by TH588. Oxidized purine nucleoside triphosphate hydrolase which is a prominent sanitizer of the oxidized nucleotide pool. Catalyzes the hydrolysis of 2-oxo-dATP (2-hydroxy-dATP) into 2-oxo-dAMP. Also has a significant hydrolase activity toward 2-oxo-ATP, 8-oxo-dGTP and 8-oxo-dATP. Through the hydrolysis of oxidized purine nucleoside triphosphates, prevents their incorporation into DNA and the subsequent transversions A:T to C:G and G:C to T:A. Also catalyzes the hydrolysis of methylated purine nucleoside triphosphate preventing their integration into DNA. Through this antimutagenic activity protects cells from oxidative stress. In Danio rerio (Zebrafish), this protein is Oxidized purine nucleoside triphosphate hydrolase (nudt1).